A 342-amino-acid polypeptide reads, in one-letter code: MAKKRDVWITEVALRDGSHAVAHQYTVEQVVKIAKALDEANVPYIEVAHGDGLAGSSLQYGLSRTNELELIEAAVSVCKQSKIAVLLLPGIGTMKDLQQVAGLGAKMARIATHVTEADVSAQHIGLAKELGMETVGFLMMAHMAPVEKLVEQAKLMESYGADAVYVVDSAGALLPHEVRDRIRALKQHVGVEIGFHGHNNLSLAMANSLVAIEEGATRIDGSVRCLGAGAGNTQTEVLVAVLDRLGVKTGIDLYKMMDLAEEIVAPMLPAPQEITRDSLVLGYAGVYSSFLLHARRIAEKLGMDARDILVELGKRKVVGGQEDMIVDVAVEMAKKRAESLVQ.

Positions 7-257 (VWITEVALRD…KTGIDLYKMM (251 aa)) constitute a Pyruvate carboxyltransferase domain. Residue 15 to 16 (RD) participates in substrate binding. Asp-16 contacts Mn(2+). Catalysis depends on His-19, which acts as the Proton acceptor. Ser-169 and His-196 together coordinate substrate. 2 residues coordinate Mn(2+): His-196 and His-198. Position 287 (Tyr-287) interacts with substrate.

Belongs to the 4-hydroxy-2-oxovalerate aldolase family.

It carries out the reaction (S)-4-hydroxy-2-oxopentanoate = acetaldehyde + pyruvate. This is 4-hydroxy-2-oxovalerate aldolase (pheE) from Geobacillus stearothermophilus (Bacillus stearothermophilus).